A 563-amino-acid chain; its full sequence is Cytochrome P450 monooxygenase phqL (563 aa).

3 consecutive transmembrane segments (helical) span residues 20–40, 52–72, and 80–100; these read ENFS…IIIF, IPVG…FVPG, and ALWL…VSIL. A glycan (N-linked (GlcNAc...) asparagine) is linked at Asn-279. The chain crosses the membrane as a helical span at residues 362–382; the sequence is LVIFAGSGTVAVTIIGCLYFL. An N-linked (GlcNAc...) asparagine glycan is attached at Asn-419. Residue Cys-502 coordinates heme.

Belongs to the cytochrome P450 family. Requires heme as cofactor.

It localises to the membrane. Its pathway is alkaloid biosynthesis. Its function is as follows. Cytochrome P450 monooxygenase; part of the gene cluster that mediates the biosynthesis of paraherquamide, a fungal indole alkaloid that belongs to a family of natural products containing a characteristic bicyclo[2.2.2]diazaoctane core. The first steps in the biosynthesis of paraherquamide is the production of the beta-methyl-proline precursor from L-isoleucine. They require oxidation of a terminally hydroxylated L-isoleucine to the corresponding aldehyde by enzymes which have still to be identified. Spontaneous cyclization and dehydration would yield the 4-methyl pyrolline-5-carboxylic acid, which is then reduced by the pyrroline-5-carboxylate reductase phqD leading to the beta-methyl-proline precursor. The next step of paraherquamide biosynthesis involves coupling of beta-methyl-proline and L-tryptophan by the bimodular NRPS phqB, to produce a monooxopiperazine intermediate. The reductase (R) domain of phqB utilizes NADPH for hydride transfer to reduce the thioester bond of the T domain-tethered linear dipeptide to a hemithioaminal intermediate, which spontaneously cleaves the C-S bond to release the aldehyde product. This compound undergoes spontaneous cyclization and dehydration to give a dienamine which is reverse prenylated at C-2 by the reverse prenyltransferase phqJ. The other prenyltransferase present in the cluster, phqI may be a redundant gene in the pathway. During biosynthetic assembly, the key step to produce the polycyclic core is catalyzed by the bifunctional reductase and intramolecular [4+2] Diels-Alderase, phqE, resulting in formation of the [2.2.2] diazaoctane intermediate preparaherquamide. Following formation of preparaherquamide, an indole 2,3-epoxidation-initiated pinacol-like rearrangement is catalyzed by the phqK FAD-dependent monooxygenase. The prenyltransferase phqA, the cytochrome P450 monooxygenase phqL, and the FAD-linked oxidoreductase phqH (or the cytochrome P450 monooxygenase phqM), are proposed to be involved in the formation of the pyran ring. The FAD-dependent monooxygenase phqK is likely responsible for generation of the spiro-oxindole, and the N-methylation is likely mediated by the phqN methyltransferase leading to the isolable natural product paraherquamide F. However, the order of these biosynthetic steps has still to be determined. In late-stage paraherquamide biosynthesis, the third P450 monooxygenase, phqO, is probably responsible for the C-14 hydroxylation, transforming paraherquamide F to paraherquamide G, and paraherquamide E to the final product paraherquamide A. The expansion from the 6-membered ring pyran (in paraherquamides F and G) to the 7-membered dioxepin ring (in paraherquamides A and E) represents a poorly understood but intriguing process that probably involves the 2-oxoglutarate-dependent dioxygenase phqC. Finally, the remaining members of the paraherquamide cluster, including phqI as well as phqM (or phqH), do not have a clearly prescribed role and appear to be redundant. The protein is Cytochrome P450 monooxygenase phqL of Penicillium fellutanum.